The primary structure comprises 672 residues: DNA ligase (672 aa).

NAD(+) is bound by residues 35 to 39 (DAEYD), 84 to 85 (SL), and Glu116. The active-site N6-AMP-lysine intermediate is Lys118. The NAD(+) site is built by Arg139, Glu179, Lys295, and Lys319. Zn(2+)-binding residues include Cys413, Cys416, Cys431, and Cys436. A BRCT domain is found at 593-672 (PRSAPLTGKT…EEFLRLAGKI (80 aa)).

It belongs to the NAD-dependent DNA ligase family. LigA subfamily. It depends on Mg(2+) as a cofactor. Mn(2+) serves as cofactor.

The enzyme catalyses NAD(+) + (deoxyribonucleotide)n-3'-hydroxyl + 5'-phospho-(deoxyribonucleotide)m = (deoxyribonucleotide)n+m + AMP + beta-nicotinamide D-nucleotide.. Functionally, DNA ligase that catalyzes the formation of phosphodiester linkages between 5'-phosphoryl and 3'-hydroxyl groups in double-stranded DNA using NAD as a coenzyme and as the energy source for the reaction. It is essential for DNA replication and repair of damaged DNA. In Syntrophus aciditrophicus (strain SB), this protein is DNA ligase.